The primary structure comprises 335 residues: Beta-ketoacyl-[acyl-carrier-protein] synthase III 1 (335 aa).

Active-site residues include Cys116 and His256. Residues 257–261 (QANQR) form an ACP-binding region. Asn286 is a catalytic residue.

The protein belongs to the thiolase-like superfamily. FabH family. Homodimer.

The protein resides in the cytoplasm. It carries out the reaction malonyl-[ACP] + acetyl-CoA + H(+) = 3-oxobutanoyl-[ACP] + CO2 + CoA. Its pathway is lipid metabolism; fatty acid biosynthesis. In terms of biological role, catalyzes the condensation reaction of fatty acid synthesis by the addition to an acyl acceptor of two carbons from malonyl-ACP. Catalyzes the first condensation reaction which initiates fatty acid synthesis and may therefore play a role in governing the total rate of fatty acid production. Possesses both acetoacetyl-ACP synthase and acetyl transacylase activities. Its substrate specificity determines the biosynthesis of branched-chain and/or straight-chain of fatty acids. In Bacteroides thetaiotaomicron (strain ATCC 29148 / DSM 2079 / JCM 5827 / CCUG 10774 / NCTC 10582 / VPI-5482 / E50), this protein is Beta-ketoacyl-[acyl-carrier-protein] synthase III 1.